The sequence spans 103 residues: MYRVTIVYNHPADPAAFDEHYSSKHVPLVQQIPSVKRFAAGKCDSLDGNPPSAYALAQLYFESKAEAGQAFASPEGQNAAADVANFASGGVTMLFTDEETVLP.

In terms of domain architecture, EthD spans 12-88 (ADPAAFDEHY…AAADVANFAS (77 aa)).

This is an uncharacterized protein from Rhodococcus erythropolis (Arthrobacter picolinophilus).